The primary structure comprises 69 residues: uncharacterized protein (69 aa).

Disordered regions lie at residues 1-32 (MSAPYKNLDRDTKHTHPKLNETERNLNRGWGD) and 44-69 (QSDADKQLAEDKMETKYEKSKPAPSD). Composition is skewed to basic and acidic residues over residues 7–32 (NLDRDTKHTHPKLNETERNLNRGWGD) and 46–69 (DADKQLAEDKMETKYEKSKPAPSD).

This is an uncharacterized protein from Schizosaccharomyces pombe (strain 972 / ATCC 24843) (Fission yeast).